Here is a 190-residue protein sequence, read N- to C-terminus: GTP cyclohydrolase 1 (190 aa).

The Zn(2+) site is built by C75, H78, and C146.

This sequence belongs to the GTP cyclohydrolase I family. Homomer.

The enzyme catalyses GTP + H2O = 7,8-dihydroneopterin 3'-triphosphate + formate + H(+). It participates in cofactor biosynthesis; 7,8-dihydroneopterin triphosphate biosynthesis; 7,8-dihydroneopterin triphosphate from GTP: step 1/1. The chain is GTP cyclohydrolase 1 from Campylobacter jejuni subsp. jejuni serotype O:6 (strain 81116 / NCTC 11828).